Here is a 307-residue protein sequence, read N- to C-terminus: Small ribosomal subunit protein uS2 (307 aa).

The disordered stretch occupies residues 256 to 307 (GGEAEQAAVDATGGAATEETPAAESTGAASEAAAVSEAAEPATEQPAADAEA). A compositionally biased stretch (low complexity) spans 259–307 (AEQAAVDATGGAATEETPAAESTGAASEAAAVSEAAEPATEQPAADAEA).

The protein belongs to the universal ribosomal protein uS2 family.

This Nocardioides sp. (strain ATCC BAA-499 / JS614) protein is Small ribosomal subunit protein uS2.